A 731-amino-acid chain; its full sequence is 1,4-alpha-glucan branching enzyme GlgB (731 aa).

The active-site Nucleophile is D409. Catalysis depends on E462, which acts as the Proton donor.

The protein belongs to the glycosyl hydrolase 13 family. GlgB subfamily. As to quaternary structure, monomer.

It catalyses the reaction Transfers a segment of a (1-&gt;4)-alpha-D-glucan chain to a primary hydroxy group in a similar glucan chain.. It functions in the pathway glycan biosynthesis; glycogen biosynthesis. Its function is as follows. Catalyzes the formation of the alpha-1,6-glucosidic linkages in glycogen by scission of a 1,4-alpha-linked oligosaccharide from growing alpha-1,4-glucan chains and the subsequent attachment of the oligosaccharide to the alpha-1,6 position. The chain is 1,4-alpha-glucan branching enzyme GlgB (glgB) from Dickeya chrysanthemi (Pectobacterium chrysanthemi).